The sequence spans 824 residues: Glycerol-3-phosphate acyltransferase (824 aa).

Residues 302 to 307 (CHRSHM) carry the HXXXXD motif motif.

Belongs to the GPAT/DAPAT family.

It is found in the cell inner membrane. It catalyses the reaction sn-glycerol 3-phosphate + an acyl-CoA = a 1-acyl-sn-glycero-3-phosphate + CoA. It functions in the pathway phospholipid metabolism; CDP-diacylglycerol biosynthesis; CDP-diacylglycerol from sn-glycerol 3-phosphate: step 1/3. In Actinobacillus pleuropneumoniae serotype 3 (strain JL03), this protein is Glycerol-3-phosphate acyltransferase.